The primary structure comprises 1052 residues: Protein HelA (1052 aa).

A run of 13 helical transmembrane segments spans residues 14–34, 121–141, 348–368, 369–389, 393–413, 450–470, 483–503, 537–557, 878–898, 903–923, 934–954, 979–999, and 1011–1031; these read WFVLLFTLVIAILGVYNFQRL, LPPGVETTLGPISTGLGEIFM, GALLVCVILFLFLGNIRAALI, TAMVIPLSMLLTITGMVENQI, LMSLGALDFGLIVDGAVIIVE, SIFGVFIITVVYLPILTLTGV, IIALLASMLFALTFVPAAVAI, VVISAAVALVVVSLGIAFHLG, LQIVVPITLLGIFLLLFISFG, ALLVFTGIPLALTGGVFALWL, VGFIALSGVAVLNGLVMITFI, PVLMTALVASLGFVPMALATG, and VVIGGIISSTFLTLLVLPGLY.

It belongs to the resistance-nodulation-cell division (RND) (TC 2.A.6) family.

It is found in the cell inner membrane. Its function is as follows. Presumed to function with HelC and HelB in efflux of an unidentified substrate. The sequence is that of Protein HelA (helA) from Legionella pneumophila.